The following is a 77-amino-acid chain: Large ribosomal subunit protein uL29 (77 aa).

It belongs to the universal ribosomal protein uL29 family.

The sequence is that of Large ribosomal subunit protein uL29 from Mycolicibacterium smegmatis (strain ATCC 700084 / mc(2)155) (Mycobacterium smegmatis).